We begin with the raw amino-acid sequence, 348 residues long: Protein RecA (348 aa).

Gly68–Thr75 provides a ligand contact to ATP.

This sequence belongs to the RecA family.

It localises to the cytoplasm. Can catalyze the hydrolysis of ATP in the presence of single-stranded DNA, the ATP-dependent uptake of single-stranded DNA by duplex DNA, and the ATP-dependent hybridization of homologous single-stranded DNAs. It interacts with LexA causing its activation and leading to its autocatalytic cleavage. This is Protein RecA from Rhodococcus opacus (strain B4).